The following is a 446-amino-acid chain: tRNA-2-methylthio-N(6)-dimethylallyladenosine synthase (446 aa).

The MTTase N-terminal domain maps to 3-120 (KKIYIKTFGC…LPEMLKQRRS (118 aa)). Residues Cys12, Cys49, Cys83, Cys157, Cys161, and Cys164 each contribute to the [4Fe-4S] cluster site. One can recognise a Radical SAM core domain in the interval 143-375 (KVEGATAFVS…QAVIDQNTRR (233 aa)). Residues 378-444 (DEMVGSVQRI…AYTLRGEIVV (67 aa)) enclose the TRAM domain.

This sequence belongs to the methylthiotransferase family. MiaB subfamily. In terms of assembly, monomer. [4Fe-4S] cluster is required as a cofactor.

It is found in the cytoplasm. The enzyme catalyses N(6)-dimethylallyladenosine(37) in tRNA + (sulfur carrier)-SH + AH2 + 2 S-adenosyl-L-methionine = 2-methylsulfanyl-N(6)-dimethylallyladenosine(37) in tRNA + (sulfur carrier)-H + 5'-deoxyadenosine + L-methionine + A + S-adenosyl-L-homocysteine + 2 H(+). Functionally, catalyzes the methylthiolation of N6-(dimethylallyl)adenosine (i(6)A), leading to the formation of 2-methylthio-N6-(dimethylallyl)adenosine (ms(2)i(6)A) at position 37 in tRNAs that read codons beginning with uridine. The protein is tRNA-2-methylthio-N(6)-dimethylallyladenosine synthase of Herminiimonas arsenicoxydans.